Reading from the N-terminus, the 381-residue chain is Ribosome assembly 1 protein (381 aa).

The residue at position 1 (Met-1) is an N-acetylmethionine. Disordered stretches follow at residues 1–38 (MNYN…IKRQ), 164–216 (KDTF…DRDE), and 350–381 (FGSS…TRNK). Ser-172 is subject to Phosphoserine. The segment covering 359 to 371 (NHYKPNYKNRKPN) has biased composition (basic residues).

It is found in the nucleus. Its function is as follows. Involved in a late nucleoplasmic step of 60S ribosomal subunit assembly. The polypeptide is Ribosome assembly 1 protein (RSA1) (Saccharomyces cerevisiae (strain ATCC 204508 / S288c) (Baker's yeast)).